The following is a 502-amino-acid chain: ATP synthase subunit alpha (502 aa).

Residue 169–176 (GDRQTGKT) coordinates ATP.

This sequence belongs to the ATPase alpha/beta chains family. F-type ATPases have 2 components, CF(1) - the catalytic core - and CF(0) - the membrane proton channel. CF(1) has five subunits: alpha(3), beta(3), gamma(1), delta(1), epsilon(1). CF(0) has three main subunits: a(1), b(2) and c(9-12). The alpha and beta chains form an alternating ring which encloses part of the gamma chain. CF(1) is attached to CF(0) by a central stalk formed by the gamma and epsilon chains, while a peripheral stalk is formed by the delta and b chains.

The protein localises to the cell inner membrane. It carries out the reaction ATP + H2O + 4 H(+)(in) = ADP + phosphate + 5 H(+)(out). Functionally, produces ATP from ADP in the presence of a proton gradient across the membrane. The alpha chain is a regulatory subunit. The protein is ATP synthase subunit alpha of Geotalea daltonii (strain DSM 22248 / JCM 15807 / FRC-32) (Geobacter daltonii).